Reading from the N-terminus, the 332-residue chain is MSKLPLLPTTVIGSYPRPKWLRESIRLHKAGKISDEDLQEAFNDAVIAVLKDHYNAGVDVPTDGEVRRDEMVEFFAERIKGFKFYGPVRVWGTAYYRKPSVVSKIEYKKPMLVDEFTFAKSVSYTDNLKITITGPYTIAEWSYNEYYKNKKDLVFDLAKAINQEIKNLVEAGAKIIQIDEPALHTRREDVSWGVEAVNEAVKGVNAKLVMHICYGEYSFVAPYLNELKVDQINFAFKIYNYKPLELLKRYGFDKELGAGVIDVHNRRIETSEEVANDIRKILEYFTPEKVWINPDCGLKLLSRKIAYQKLVSMVEGTKVVREELKRKGYSVD.

The Zn(2+) site is built by His-211, Cys-213, and Cys-296.

Belongs to the archaeal MetE family. It depends on Zn(2+) as a cofactor.

It functions in the pathway amino-acid biosynthesis; L-methionine biosynthesis via de novo pathway. Catalyzes the transfer of a methyl group to L-homocysteine resulting in methionine formation. The physiological methyl donor is unknown. The polypeptide is Methionine synthase (Saccharolobus islandicus (strain L.S.2.15 / Lassen #1) (Sulfolobus islandicus)).